The chain runs to 639 residues: MADDRFTLPLRPLIEKRDRPDPLPLEIAQINAQWGSFRDVSEESLRAKIEEEKSKEYTIEEEEGEGAGAELDTTERLDQLYKRRAEIIQFAMQAHMEAMFALDFVSMLLSKHTPRQAETSMSAYLKQVAPLGSLHSEIINPPPKSEAVVRDTKTVSRGWRLQSFNAAADKLLKSASRLENEVASETRYWHEVLAVKDKGWKLCRLPRQGQTLGVQYGFLEATPIFRDRGLAALRRSEDGTLILDKGLVPTKAKTVRVRVKDCGIITGCSKPYRSAAQDPDSIEGRILQARDTLYEEELFHELFREARIMGSQGVTTRQNLVQFPVSEEQEILLDLVDPDQEVYVDDEATKSEEHNVLADALAHLIRILLCYAHRQNLRRRTQPPPALSPKRRHIPEYQLLRPIMAYLQHSFHVRWLETFMKDVYGVLQSAGLSCSFTATPYSSVNLSNIDRSVPKVEGLIRQFLLPLESTFSADLLTPQSSFKVKSRTNLSVPPFGTQFEILLNLPHYPDVHPPHRIGLHDQAANIITHFIMLDIVAAIELQTSPALSISKTEAKSVSWEATYPHHGELLSVSIDGKQKKMKVILSRDELTIQTYDVLGLERYSRAAPETTPGLQTHTWKAGPTTAPSLMEYVAAVSQR.

The stretch at 160–187 (RLQSFNAAADKLLKSASRLENEVASETR) forms a coiled coil.

Belongs to the Mediator complex subunit 17 family. As to quaternary structure, component of the Mediator complex.

It localises to the nucleus. Its function is as follows. Component of the Mediator complex, a coactivator involved in the regulated transcription of nearly all RNA polymerase II-dependent genes. Mediator functions as a bridge to convey information from gene-specific regulatory proteins to the basal RNA polymerase II transcription machinery. Mediator is recruited to promoters by direct interactions with regulatory proteins and serves as a scaffold for the assembly of a functional preinitiation complex with RNA polymerase II and the general transcription factors. This chain is Mediator of RNA polymerase II transcription subunit 17 (srb4), found in Aspergillus fumigatus (strain ATCC MYA-4609 / CBS 101355 / FGSC A1100 / Af293) (Neosartorya fumigata).